A 204-amino-acid chain; its full sequence is Peptide chain release factor homolog (204 aa).

Residues Ile2–Phe98 form an rRNA-recognition domain, N-terminus region. The linker 1 stretch occupies residues Thr99 to Asp107. Residues Ala108 to Ile161 form a GGQ domain region. Residues Gly120–Gln122 carry the GGQ motif motif. A linker 2 region spans residues Ala162 to Gln179. The segment at Arg180 to Gly204 is rRNA-recognition domain, C-terminus.

Belongs to the prokaryotic/mitochondrial release factor family. Found in the A site of damaged 70S ribosomes, but not in undamaged ribosomes. Contacts (damaged) 16S rRNA, 23S rRNA and ribosomal protein uS12, but not mRNA.

Peptide chain release-like factor that acts on 70S ribosomes with specific damage to their decoding center (cleavage of 16S rRNA between adenine-1493 and guanosine-1494, E.coli 16S rRNA numbering). Probably acts as a peptidyl-tRNA hydrolase, allowing release of the nascent chain and dissociation of the 30S and 50S subunits. Can release mRNA as short as 19 nucleotides (nt, mRNA-19, which has a single amino acid in the P-site and only a single nt in the A-site) from the ribosome. This specific cleavage is inflicted by CdiA (ECL_04451) or by colicin E3-type (ColE3) proteins. In vivo the PrfH-RtcB2 pair restores growth in the presence of ribotoxins that specifically create this damage. In Escherichia coli (strain ATCC 25922 / DSM 1103 / LMG 8223 / NCIMB 12210 / NCTC 12241 / WDCM 00013 / Seattle 1946), this protein is Peptide chain release factor homolog.